Here is a 168-residue protein sequence, read N- to C-terminus: MKKAKRNPLLARLAGRLELTLDVRSDAAALPPPALIRRACQAALRRDVKQAQISIVIVDAAEGRQLNNDYRGKDYATNVLSFALNEGEPVEGLPLFGDLVLCAPVVEQEAAEQNKALMAHYAHLLVHGMLHLQGFDHEEDAEAEAMEVLETVIVKQLGYPDPYHEEHI.

Zn(2+) contacts are provided by histidine 127, histidine 131, and histidine 137.

Belongs to the endoribonuclease YbeY family. It depends on Zn(2+) as a cofactor.

The protein localises to the cytoplasm. Single strand-specific metallo-endoribonuclease involved in late-stage 70S ribosome quality control and in maturation of the 3' terminus of the 16S rRNA. The polypeptide is Endoribonuclease YbeY (Chromobacterium violaceum (strain ATCC 12472 / DSM 30191 / JCM 1249 / CCUG 213 / NBRC 12614 / NCIMB 9131 / NCTC 9757 / MK)).